The sequence spans 472 residues: ESX-3 secretion system protein EccD3 (472 aa).

A run of 11 helical transmembrane segments spans residues 121–141 (WGIAHIQRGALAAVIAVALLA), 155–175 (LAGLLAVAGIAVASALAGLLI), 183–203 (GIALSIAALVPIGAALALAVP), 211–231 (VLLGAAGVAAWSLIALMIPSA), 236–256 (VVAFFTAAAVVGASVALAAGA), 258–278 (LLWQLPLLSIGCGLIVAALLV), 327–347 (QSGFIAAAVLLSVLGSVAIAV), 349–369 (PEALSVVGWYLVAATAAAATL), 381–401 (AWLLAQPYLVAGVLLVFYTAT), 405–425 (VAAFGAVLVLAVLMLAWVVVA), and 450–470 (GLDVSLIPVMAYLVGLFAWVL).

It belongs to the EccD/Snm4 family. Part of the ESX-3 / type VII secretion system (T7SS), which is composed of cytosolic and membrane components. The ESX-3 membrane complex is composed of EccB3, EccC3, EccD3 and EccE3.

It is found in the cell inner membrane. Part of the ESX-3 specialized secretion system, which is important for iron and zinc uptake or homeostasis. The protein is ESX-3 secretion system protein EccD3 of Mycobacterium tuberculosis (strain CDC 1551 / Oshkosh).